The primary structure comprises 522 residues: F-box only protein 7 (522 aa).

Residues 1–88 (MRLRVRLLKR…QDDIPAPNIP (88 aa)) are ubiquitin-like. A disordered region spans residues 85–144 (PNIPSSTDSEHSSLQNNEQPSLATSSNQTSMQDEQPSDSFQGQAAQSGVWNDDSMLGPSQ). Residues 87–133 (IPSSTDSEHSSLQNNEQPSLATSSNQTSMQDEQPSDSFQGQAAQSGV) show a composition bias toward polar residues. Residues 92 to 129 (DSEHSSLQNNEQPSLATSSNQTSMQDEQPSDSFQGQAA) form an important for interaction with PINK1 region. The tract at residues 129–169 (AQSGVWNDDSMLGPSQNFEAESIQDNAHMAEGTGFYPSEPM) is important for interaction with CDK6. The interval 180-324 (PHSLETLYQS…PLLAFTRQAL (145 aa)) is important for dimerization and interaction with PSMF1. The F-box domain maps to 329-375 (VFGLVVLPLELKLRIFRLLDVRSVLSLSAVCRDLFTASNDPLLWRFL). An important for interaction with CDK6 region spans residues 381-522 (RDNTVRVQDT…RPTDGRLSFM (142 aa)). Residues Arg432 and Arg451 each carry the omega-N-methylarginine modification. The short motif at 481 to 484 (RFDP) is the RFDP motif element. Residues 483 to 522 (DPVGPLPGPNPILPGRGGPNDRFPFRPSRGRPTDGRLSFM) are disordered. Residue Arg518 is modified to Asymmetric dimethylarginine.

As to quaternary structure, part of the SCF (SKP1-CUL1-F-box) E3 ubiquitin-protein ligase complex SCF(FBXO7) formed of CUL1, SKP1, RBX1 and FBXO7. Interacts via its C-terminal proline-rich region with DLGAP5. Interacts with BIRC2. Interacts with CDK6 and promotes its interaction with D-type cyclin. Interacts with PSMF1. In terms of assembly, interacts (via the N-terminal Ubl domain) with PRKN. Interact (via N-terminal region) with PINK1. Interact (via N-terminal region) with PINK1.

It localises to the cytoplasm. It is found in the nucleus. The protein resides in the mitochondrion. The protein localises to the cytosol. It participates in protein modification; protein ubiquitination. Functionally, substrate recognition component of a SCF (SKP1-CUL1-F-box protein) E3 ubiquitin-protein ligase complex which mediates the ubiquitination and subsequent proteasomal degradation of target proteins and plays a role in several biological processes such as cell cycle, cell proliferation, or maintenance of chromosome stability. Recognizes and ubiquitinates BIRC2 and the cell cycle regulator DLGAP5. Plays a role downstream of PINK1 in the clearance of damaged mitochondria via selective autophagy (mitophagy) by targeting PRKN to dysfunctional depolarized mitochondria. Promotes MFN1 ubiquitination. Mediates the ubiquitination and proteasomal degradation of UXT isoform 2, thereby impairing the NF-kappa-B signaling pathway. Inhibits NF-kappa-B pathway also by promoting the ubiquitination of TRAF2. Affects the assembly state and activity of the proteasome in the cells including neurons by ubiquitinating the proteasomal subunit PSMA2 via 'Lys-63'-linked polyubiquitin chains. Promotes 'Lys-48'-linked polyubiquitination SIRT7, leading to the hydrogen peroxide-induced cell death. The chain is F-box only protein 7 (FBXO7) from Homo sapiens (Human).